Consider the following 277-residue polypeptide: Undecaprenyl-diphosphatase (277 aa).

The next 7 membrane-spanning stretches (helical) occupy residues 1–21 (MTWI…FLPI), 41–61 (GAAF…IYFW), 90–110 (WLII…EDWI), 114–134 (FRSL…LALA), 191–211 (AFLL…YTSL), 224–244 (ETLV…AWLM), and 255–275 (FVWY…AGVI).

The protein belongs to the UppP family.

Its subcellular location is the cell membrane. It carries out the reaction di-trans,octa-cis-undecaprenyl diphosphate + H2O = di-trans,octa-cis-undecaprenyl phosphate + phosphate + H(+). Catalyzes the dephosphorylation of undecaprenyl diphosphate (UPP). Confers resistance to bacitracin. This chain is Undecaprenyl-diphosphatase, found in Micrococcus luteus (strain ATCC 4698 / DSM 20030 / JCM 1464 / CCM 169 / CCUG 5858 / IAM 1056 / NBRC 3333 / NCIMB 9278 / NCTC 2665 / VKM Ac-2230) (Micrococcus lysodeikticus).